The sequence spans 60 residues: LLTLAVLLMVSADMAFAGFGCPGDQYECNRHCRSIGCRAGYCDAVTLWLRCTCTGCSGKK.

An N-terminal signal peptide occupies residues 1–17 (LLTLAVLLMVSADMAFA). Positions 19, 20, and 21 each coordinate beta-D-GlcNAc-(1-&gt;4)-Mur2Ac(oyl-L-Ala-gamma-D-Glu-L-Lys-D-Ala-D-Ala)-di-trans,octa-cis-undecaprenyl diphosphate. 4 disulfides stabilise this stretch: Cys-21–Cys-42, Cys-28–Cys-51, Cys-32–Cys-53, and Cys-37–Cys-56. The binds to membrane interface stretch occupies residues 22–25 (PGDQ). His-31 serves as a coordination point for beta-D-GlcNAc-(1-&gt;4)-Mur2Ac(oyl-L-Ala-gamma-D-Glu-L-Lys-D-Ala-D-Ala)-di-trans,octa-cis-undecaprenyl diphosphate. The interval 43–49 (DAVTLWL) is binds to membrane interface. Cys-51 provides a ligand contact to beta-D-GlcNAc-(1-&gt;4)-Mur2Ac(oyl-L-Ala-gamma-D-Glu-L-Lys-D-Ala-D-Ala)-di-trans,octa-cis-undecaprenyl diphosphate.

It belongs to the invertebrate defensin family. Expressed in hemocytes.

The protein resides in the secreted. The protein localises to the target cell membrane. In terms of biological role, antibacterial peptide mostly active against Gram-positive bacteria. It acts by selectively inhibiting peptidoglycan biosynthesis through complex formation with the cell wall precursor lipid II (1:1 molar ratio) thus inhibiting cell wall synthesis. It does not disrupt cell membranes. Is noticeably more potent than Cg-Defh1. The polypeptide is Hemocyte defensin Cg-Defh2 (Magallana gigas (Pacific oyster)).